Here is a 513-residue protein sequence, read N- to C-terminus: uncharacterized protein (513 aa).

The next 13 membrane-spanning stretches (helical) occupy residues 3–23 (MTAF…TYFA), 47–67 (LAIA…GMIA), 71–91 (FDGF…LYIV), 129–149 (TFYM…LLGL), 153–173 (AAVL…GMIA), 177–197 (VQII…IIVF), 233–253 (ETLS…HILI), 273–293 (WIIG…AAFV), 320–340 (FLFA…VTGL), 374–394 (ASVA…SLNV), 395–415 (AFLV…LIVF), 424–444 (ASGA…LVSM), and 462–482 (LIPL…GAWL).

It belongs to the sodium:solute symporter (SSF) (TC 2.A.21) family.

Its subcellular location is the cell membrane. This is an uncharacterized protein from Bacillus subtilis (strain 168).